A 460-amino-acid polypeptide reads, in one-letter code: MQSIILIGKPNVGKSSLFNRMARQRIAITSDISGTTRDTNKTQIHIHSKKAMLIDSGGLDESDELFKNVKKNTLKVAKESDIILYLVDGKLAPDDEDRQFFYSLKKLGKPIALVVNKVDNKKDEERAWEFANFGVKEIFNLSVTHNVGLDELYEWLEKFLHEEFLIPDEEENLEDFLEHYEEGKEFQFKEVDQNHIRVGIVGRVNVGKSSLLNALVKQERSVVSSIAGTTIDPVNESVVHKDKVIEFVDTAGIRKRGKIQGLERFALNRTEKILSHSQIALLVLDAHEGFNELDERIAGLVAKHYLGVIIVLNKWDKSEMDFDKTVKELRLDRFKFLAYAPVISVSALSGKRVHVLLDKILQIFENFTQKIQTSKLNTLIENATRAHPLPHDYGKLVKIYYAVQYDLAPPKIALIMNRPKALHFSYKRYLQNQIRKEFNFEGVPLVIASRKKGSKENDES.

EngA-type G domains are found at residues Gln2–Phe164 and Ile196–Thr368. Residues Gly8–Ser15, Asp55–Leu59, Asn116–Asp119, Gly202–Ser209, Asp249–Ile253, and Asn313–Asp316 each bind GTP. Positions Gln369–Gly453 constitute a KH-like domain.

This sequence belongs to the TRAFAC class TrmE-Era-EngA-EngB-Septin-like GTPase superfamily. EngA (Der) GTPase family. As to quaternary structure, associates with the 50S ribosomal subunit.

GTPase that plays an essential role in the late steps of ribosome biogenesis. The chain is GTPase Der from Campylobacter jejuni subsp. jejuni serotype O:23/36 (strain 81-176).